The chain runs to 311 residues: Transcription factor MafB (311 aa).

2 disordered regions span residues 35–78 and 150–199; these read PLGR…PTEQ and EDLA…EDRF. Low complexity predominate over residues 54–76; sequence SVSSTPISTPCSSVPSSPSFSPT. Positions 157–167 are enriched in basic residues; that stretch reads HPHHHHHHHHQ. Residues 168 to 194 are compositionally biased toward low complexity; sequence ASPTPSTSSSSSQQLQTSHQQHPPSSS. Residues 226 to 251 form a basic motif region; that stretch reads RLKQKRRTLKNRGYAQSCRYKRVQQK. The 64-residue stretch at 226–289 folds into the bZIP domain; the sequence is RLKQKRRTLK…DAYKLKCEKL (64 aa). Residues 254–275 are leucine-zipper; sequence LENEKTQLIQQVEQLKQEVTRL.

This sequence belongs to the bZIP family. Maf subfamily. In terms of assembly, homodimer or heterodimer with other bHLH-Zip transcription factors. Binds DNA as a homodimer or heterodimer. Self-associates; the interaction requires the intact MAFB leucine-zipper domain. Interacts with FOS, HOXD12 and PRRX1. As to expression, expressed in brain, thymus, gut, lung, mesenterium, spleen, kidney, ovary and bursa.

It localises to the nucleus. Its function is as follows. Acts as a transcriptional activator or repressor. Positively regulates the expression of alpha-A crystallin genes during lens fiber cell differentiation. Binds to Maf recognition elements (MARE). This Gallus gallus (Chicken) protein is Transcription factor MafB (MAFB).